We begin with the raw amino-acid sequence, 739 residues long: Double-strand break repair protein mus-23 (739 aa).

The Mn(2+) site is built by Asp16, His18, Asp56, and Asn123. His124 (proton donor) is an active-site residue. 3 residues coordinate Mn(2+): His212, His240, and His242. The segment at 516-739 (FDAGQHKQAQ…KPGLLARRLG (224 aa)) is disordered. Residues 523 to 532 (QAQRTKRFKR) are compositionally biased toward basic residues. Basic and acidic residues predominate over residues 559 to 568 (VEPKGNDRPT). The span at 599–636 (KRGAAAKTTAAAKKAAPGKKAAPAKKAAPAKKAAPAKK) shows a compositional bias: low complexity. The segment covering 637–646 (APARGRKKKT) has biased composition (basic residues). The span at 650-686 (DSDEEEEEDYPEDDDEEEEEADEEEEDVIMEDDEEDP) shows a compositional bias: acidic residues. Low complexity predominate over residues 694–722 (KATSRVASTRASARATPVRATPARATQAR).

It belongs to the MRE11/RAD32 family. As to quaternary structure, component of the MRN complex composed of two heterodimers RAD50 and MRE11 associated with a single NBS1. The cofactor is Mn(2+).

The protein localises to the nucleus. It is found in the chromosome. Its subcellular location is the telomere. Functionally, core component of the MRN complex, which plays a central role in double-strand break (DSB) repair, DNA recombination, maintenance of telomere integrity and meiosis. The MRN complex is involved in the repair of DNA double-strand breaks (DSBs) via homologous recombination (HR), an error-free mechanism which primarily occurs during S and G2 phases. The complex (1) mediates the end resection of damaged DNA, which generates proper single-stranded DNA, a key initial steps in HR, and is (2) required for the recruitment of other repair factors and efficient activation of ATM and ATR upon DNA damage. Within the MRN complex, MRE11 possesses both single-strand endonuclease activity and double-strand-specific 3'-5' exonuclease activity. MRE11 first endonucleolytically cleaves the 5' strand at DNA DSB ends to prevent non-homologous end joining (NHEJ) and licence HR. It then generates a single-stranded DNA gap via 3' to 5' exonucleolytic degradation, which is required for single-strand invasion and recombination. The MRN complex is also required for the processing of R-loops. This chain is Double-strand break repair protein mus-23 (mus-23), found in Neurospora crassa (strain ATCC 24698 / 74-OR23-1A / CBS 708.71 / DSM 1257 / FGSC 987).